The chain runs to 953 residues: Glycine dehydrogenase (decarboxylating) (953 aa).

Residue lysine 705 is modified to N6-(pyridoxal phosphate)lysine.

Belongs to the GcvP family. The glycine cleavage system is composed of four proteins: P, T, L and H. Pyridoxal 5'-phosphate is required as a cofactor.

It carries out the reaction N(6)-[(R)-lipoyl]-L-lysyl-[glycine-cleavage complex H protein] + glycine + H(+) = N(6)-[(R)-S(8)-aminomethyldihydrolipoyl]-L-lysyl-[glycine-cleavage complex H protein] + CO2. Functionally, the glycine cleavage system catalyzes the degradation of glycine. The P protein binds the alpha-amino group of glycine through its pyridoxal phosphate cofactor; CO(2) is released and the remaining methylamine moiety is then transferred to the lipoamide cofactor of the H protein. The chain is Glycine dehydrogenase (decarboxylating) from Sodalis glossinidius (strain morsitans).